A 634-amino-acid chain; its full sequence is Glutathione S-transferase C-terminal domain-containing protein (634 aa).

The GST C-terminal domain maps to 131-333; the sequence is LGFKKTCLKA…QEVPKVKTAA (203 aa). The disordered stretch occupies residues 189–233; sequence RVHNDDKLRRQKLKQQKAAGSEPPSGKGKAKSKASAQKTPKDLAA. The segment covering 204-226 has biased composition (low complexity); the sequence is QKAAGSEPPSGKGKAKSKASAQK.

The protein belongs to the GSTCD family.

It is found in the cytoplasm. In Mus musculus (Mouse), this protein is Glutathione S-transferase C-terminal domain-containing protein (Gstcd).